We begin with the raw amino-acid sequence, 101 residues long: Acylphosphatase (101 aa).

The 89-residue stretch at 11–99 (SWLVKAIGRV…PRLNRFDRLP (89 aa)) folds into the Acylphosphatase-like domain. Residues Arg26 and Asn44 contribute to the active site.

It belongs to the acylphosphatase family.

It catalyses the reaction an acyl phosphate + H2O = a carboxylate + phosphate + H(+). In Polaromonas naphthalenivorans (strain CJ2), this protein is Acylphosphatase (acyP).